Consider the following 540-residue polypeptide: Chaperonin GroEL (540 aa).

ATP is bound by residues 29-32 (TLGP), 86-90 (DGTTT), Gly413, 476-478 (NAA), and Asp492.

Belongs to the chaperonin (HSP60) family. As to quaternary structure, forms a cylinder of 14 subunits composed of two heptameric rings stacked back-to-back. Interacts with the co-chaperonin GroES.

Its subcellular location is the cytoplasm. It carries out the reaction ATP + H2O + a folded polypeptide = ADP + phosphate + an unfolded polypeptide.. Functionally, together with its co-chaperonin GroES, plays an essential role in assisting protein folding. The GroEL-GroES system forms a nano-cage that allows encapsulation of the non-native substrate proteins and provides a physical environment optimized to promote and accelerate protein folding. This is Chaperonin GroEL from Streptococcus agalactiae serotype V (strain ATCC BAA-611 / 2603 V/R).